The primary structure comprises 2531 residues: METNNNKNIQEDIAIIGFRIPGCQDNTPSELWNNLMNKFSGVGKTTERWSDNYHLSGDINNGNSGLLPLKEWKKFDPAFFGINPTMVSTIDPQQRILLKCTWEALEDAGIDPIKLRGSNTSIFIGCSTGDYLDMVKSNNEIQTNLFGSVNHSLSNRISYCFDFHGASMTIDSACSSSLNTVLLGCQSINQGKSNLCIAGGVNFILDTTIPTAFSFLNILSKNGKCMTYDEGADGFVRGEGAGLVVLKSLKDAIKDGNNIYCIIKGGNTNVDGNGNADKANFFQPSKQSQSDNIKLALESIKKKSMLDIDIDYVETHGTGTPTGDPIEVEGISKVFKENHSPENPLLIGSLKSNIGHMEAASGVTSLIKCCLMFKNKSFAPNVNFQKINPKIKLDEWNIKVVTEAIPFKKNKITSMVVNSFGVTGSNCCLVLTESINNNNNSNVDKITKNEKEYLIPFSANSNQSLKNYIEEVSKIDESLQFEDFVYKQLSNKSTSLFQRFVVTSKDWKELKYKLSQPLPLKEISSSISVKKPNPITVFVFCGQGSQFNKMGLELYNNDKNFRNYIDRFDKKLLEYYGYSVISKLRSIDDNDLITIHDPIIAQPATAILQISLFELYKHWGINPSFIVGHSLGELPMAFCSGMIDFDTVCYLLYHRSLAQSKTNGCGKMLSCNISSEEFVKNYSPRYPFLEIACYNSPNSIVVAGKESILLELSKEFKNSGIFCAMLGSLSSFHTSSQLEVKDHIYSLKFESKEPVIPTFSTVTTHLFNSNKLYDNDYIFQNIMKPVLFNETISNLYKHVENNQLGSEMIFIELAPHQTLSFYLKQLIPKDSNYFSNSNSITILSPLHKKKNDYLEIQQTISTCYCKGYDVNFKSQILIESKTNISNKSLPLYQWDDKEFWKDLEKQKRILQGPPMDTLGFSNEKSPILKSFETKIDIKKKPFQYLKGHIVKGKIYFPGVGYIENLLKMYPSQDIDIDSMEFEAPLILIEGIVTCLQSNVYKIGKNEFKVQFHFQDQKTKQWIQSSFANYHLSHRDDFDPTTNKLNIQNLISNNCNLTKLSKNQFYNFIKAKAGLSYNGEFQGVEKCYLGDNCSLVEIPFDTSNQDVETNINMIPILDSCLHGVHILYVEQCQMVLEKIEGLKYYSSTLILSKQKEQQKLYVFTRIENKDLINNSISASIIVMISDGTVFFEIESVSLKSLIPLKDPISIENPTDELFSSYLQSIDSLISEPSSYKSIYKRNEFISSGMSDLSRSDYQQFISTLLYTNLIKRNQSIESDLRNQIEFEEIKAKYCKNSKFERLFTFVIETIKQYDGINGNLNSWNEGNIDIYKILIKSTRIISKLLFPLQGEDTTIDTPQSLFENNLLDDFYNINGNTVIQNQLVGEIITQSIKPLINEKMVFRILEFGGGVGSLSIVTLNKINQLLEQHPNFQIDIEYTWTDISPSFIPDAKKLLSNIKGVTIIYRSLDLEESLIEKQLLKPSYYDFVIMSNVLHVIKEIKFGIDEIYKVLSPNGQLLFIETPYRMLICDSIFGVFDQWWGFTDTGIRVDRCCMKQKTWFKLLSESNYQDIIMSDDIKDCCFVIQAKKPSISSLEYKLKIDSQENDKIIVFGENDTFMKYLENKSTKQIIKIKTCQQFSDLITSNSKEINNQSIIYFIKTLNQLLIENFKEITLEYIQINQLLLSSGLSCKHILLLNQSTSENYLGSSISGAARYFDEFPPLKLYSFDFDKYSLNNESINIIDDIIEPIIKSMNNSNIRKELLVRNNKIFFERYKQEKRIKENYKSTSFENDKSLFVHLNANLEYELKSKQVKLKQNEIEVNVKATGINYKDYLVYTAMTPSELINHKGESNPEFGHDFSGIITRIGDDDGDNDNEFKVGDQVYGIWFNTTASHIIVDKEFLCHKPSKLSHTIASSIPVVYITSLYSLYNIGNIQNDESILIHSASGGIGLSALNILKWKNHKSHIFVTVGSKEKEKYIHDTYGDFITGIYSSRNKDYLKLIKRKLTELGSNKKGVDIILNTLSSSEHMVSNFKCLNHRGRIIDLSITHLNHNEYTCNNNFKYNYGYHNVEVLFVKGDIISKLLKNITSAIENGSLSTGIPIIEFNDSDCFNAIEFINKRQHIGKIVVNHNKENLIQELIKKTNLPIIKSNYQINSDHLGKNILVTGQSGIILEILKWIVKYSTNVENIIILSRSSLKWELELLVNKNKNKLNFIYKSVDVGNSLEIEKVIDEILMENPQINNVDSIFHYAFTQISCKEHEIDQVHLNVSHQAKTMGAINLHNQSIKRNWKLINFIMASSAAGLIGSTDQCSYVCSSNVLDTFSKYRKHVLGLPSICINYGLIESTGFVSRNQSVAVMLDGQGIRPMQTNQILGSLDLFIQNPSKSTNIILTSFNFNEFATGNLQQSNVHKFDFQFNCCLSQKSKLMANNQASENPVKDLLINNICELLSIDESKLNIDIRLIDYGSDSLTIVQIKNLIDKNLLIPNLISIQMLQNNSISDNIKILTDSYNKKKQNEQNELKNIKVGSFTKK.

The Ketosynthase family 3 (KS3) domain maps to 10 to 433 (QEDIAIIGFR…GSNCCLVLTE (424 aa)). Active-site for beta-ketoacyl synthase activity residues include cysteine 174, histidine 316, and histidine 356. Residues 620 to 653 (GINPSFIVGHSLGELPMAFCSGMIDFDTVCYLLY) form an acyl/malonyl transferase region. The active-site For acyl/malonyl transferase activity is serine 630. Residues 915-1036 (MDTLGFSNEK…ANYHLSHRDD (122 aa)) are N-terminal hotdog fold. The PKS/mFAS DH domain maps to 915–1206 (MDTLGFSNEK…LKSLIPLKDP (292 aa)). The active-site Proton acceptor; for dehydratase activity is histidine 948. The C-terminal hotdog fold stretch occupies residues 1055-1206 (NLTKLSKNQF…LKSLIPLKDP (152 aa)). Aspartate 1117 functions as the Proton donor; for dehydratase activity in the catalytic mechanism. A Carrier domain is found at 2431–2509 (ASENPVKDLL…DNIKILTDSY (79 aa)). Position 2468 is an O-(pantetheine 4'-phosphoryl)serine (serine 2468).

Requires pantetheine 4'-phosphate as cofactor.

Its function is as follows. Probable polyketide synthase. The sequence is that of Probable polyketide synthase 26 (pks26) from Dictyostelium discoideum (Social amoeba).